The following is a 65-amino-acid chain: Putative beta-neurotoxin RjAa7 (65 aa).

Residues 1–64 (KEGYPVGRDG…VWDSSTNKCG (64 aa)) form the LCN-type CS-alpha/beta domain. Disulfide bonds link Cys11–Cys63, Cys15–Cys37, Cys22–Cys44, and Cys26–Cys46.

Belongs to the long (4 C-C) scorpion toxin superfamily. Sodium channel inhibitor family. Beta subfamily. As to expression, expressed by the venom gland.

The protein resides in the secreted. In terms of biological role, beta toxins bind voltage-independently at site-4 of sodium channels (Nav) and shift the voltage of activation toward more negative potentials thereby affecting sodium channel activation and promoting spontaneous and repetitive firing. The chain is Putative beta-neurotoxin RjAa7 from Rhopalurus junceus (Caribbean blue scorpion).